A 316-amino-acid chain; its full sequence is Apolipoprotein E (316 aa).

Positions 1–18 (MKVLWAALVVTLLAGCGA) are cleaved as a signal peptide. 8 repeat units span residues 83–104 (ALMD…EQLG), 105–126 (PVTE…ARLG), 127–148 (ADME…AMVG), 149–170 (QSTE…KRLL), 171–192 (RDAE…EGAA), 193–214 (RSVN…TVHT), 215–232 (LVSK…QRLR), and 233–254 (GRLE…EQVQ). The tract at residues 83–254 (ALMDDTMKEV…RLDEVREQVQ (172 aa)) is 8 X 22 AA approximate tandem repeats. Positions 161–171 (HLRKLRKRLLR) are LDL and other lipoprotein receptors binding. A heparin-binding site is contributed by 165–168 (LRKR). The tract at residues 213–289 (HTLVSKPLQE…SWFEPLVQDM (77 aa)) is lipid-binding and lipoprotein association. Residue 228-235 (AQRLRGRL) coordinates heparin. The tract at residues 265–316 (NQVRLQAEAFQGRLKSWFEPLVQDMQQKWAELVEKVQLAVGAVPTSVPSEKQ) is homooligomerization. Positions 277–289 (RLKSWFEPLVQDM) are specificity for association with VLDL.

This sequence belongs to the apolipoprotein A1/A4/E family. Homotetramer. May interact with ABCA1; functionally associated with ABCA1 in the biogenesis of HDLs. May interact with APP/A4 amyloid-beta peptide; the interaction is extremely stable in vitro but its physiological significance is unclear. May interact with MAPT. May interact with MAP2. In the cerebrospinal fluid, interacts with secreted SORL1. Interacts with PMEL; this allows the loading of PMEL luminal fragment on ILVs to induce fibril nucleation. APOE exists as multiple glycosylated and sialylated glycoforms within cells and in plasma. The extent of glycosylation and sialylation are tissue and context specific. Post-translationally, glycated in plasma VLDL. In terms of processing, phosphorylated by FAM20C in the extracellular medium.

The protein resides in the secreted. It is found in the extracellular space. It localises to the extracellular matrix. The protein localises to the extracellular vesicle. Its subcellular location is the endosome. The protein resides in the multivesicular body. Functionally, APOE is an apolipoprotein, a protein associating with lipid particles, that mainly functions in lipoprotein-mediated lipid transport between organs via the plasma and interstitial fluids. APOE is a core component of plasma lipoproteins and is involved in their production, conversion and clearance. Apolipoproteins are amphipathic molecules that interact both with lipids of the lipoprotein particle core and the aqueous environment of the plasma. As such, APOE associates with chylomicrons, chylomicron remnants, very low density lipoproteins (VLDL) and intermediate density lipoproteins (IDL) but shows a preferential binding to high-density lipoproteins (HDL). It also binds a wide range of cellular receptors including the LDL receptor/LDLR and the very low-density lipoprotein receptor/VLDLR that mediate the cellular uptake of the APOE-containing lipoprotein particles. Finally, APOE also has a heparin-binding activity and binds heparan-sulfate proteoglycans on the surface of cells, a property that supports the capture and the receptor-mediated uptake of APOE-containing lipoproteins by cells. The protein is Apolipoprotein E (APOE) of Diceros bicornis (Black rhinoceros).